A 64-amino-acid chain; its full sequence is Gallinacin-2 (64 aa).

Residues 1–22 form the signal peptide; the sequence is MRILYLLFSLLFLALQVSPGLS. A propeptide spanning residues 23–28 is cleaved from the precursor; the sequence is SPRRDM. Cystine bridges form between Cys31-Cys57, Cys36-Cys51, and Cys41-Cys58.

As to expression, expressed in circulating heterophil granulocytes and bone marrow (at protein level). Strong expression in the bone marrow, lung and testis. Moderate expression in the bursa and intestine. Low expression in the cloaca, gall bladder, brain, pancreas, trachea, air sacs and spleen. Expressed in the vagina, ovarian stroma and the theca layer of the ovarian follicle, but not in the granulosa layer of the ovarian follicle.

The protein resides in the secreted. Its subcellular location is the cytoplasmic granule. Its function is as follows. Potent antibacterial activity against the Gram-negative bacterium E.coli ML-35, and against the Gram-positive bacterium L.monocytogenes EGD. Lacks antifungal activity against C.albicans. In Gallus gallus (Chicken), this protein is Gallinacin-2 (GAL2).